Consider the following 480-residue polypeptide: Proline--tRNA ligase (480 aa).

This sequence belongs to the class-II aminoacyl-tRNA synthetase family. ProS type 3 subfamily. As to quaternary structure, homodimer.

It is found in the cytoplasm. The enzyme catalyses tRNA(Pro) + L-proline + ATP = L-prolyl-tRNA(Pro) + AMP + diphosphate. Functionally, catalyzes the attachment of proline to tRNA(Pro) in a two-step reaction: proline is first activated by ATP to form Pro-AMP and then transferred to the acceptor end of tRNA(Pro). This chain is Proline--tRNA ligase, found in Roseiflexus castenholzii (strain DSM 13941 / HLO8).